We begin with the raw amino-acid sequence, 689 residues long: MADNLVIVESPAKAKTIEKYLGKKYKVIASMGHVRDLPRSQMGVDTEDNYEPKYITIRGKGPVVKELKKHAKKAKNVFLASDPDREGEAIAWHLSKILELEDSKENRVVFNEITKDAVKESFKNPREIEMNLVDAQQARRILDRLVGYNISPVLWKKVKKGLSAGRVQSVALRLVIDRENEIRNFKPEEYWTIEGEFRYKKSKFNAKFLHYKNKPFKLKTKKDVEKITTALDGDQFEITNVTKKEKTRNPANPFTTSTLQQEAARKLNFKARKTMMVAQQLYEGIDLKKQGTIGLITYMRTDSTRISDTAKAEAKQYITNKYGESYTSKRKASGKQGDQDAHEAIRPSSTMRTPDDMKSFLTKDQYRLYKLIWERFVASQMAPAILDTVSLDITQGDIKFRANGQTIKFKGFMTLYVETKDDSDSEKENKLPKLEQGDKVTATQIEPAQHYTQPPPRYTEARLVKTLEELKIGRPSTYAPTIDTIQKRNYVKLESKRFVPTELGEIVHEQVKEYFPEIIDVEFTVNMETLLDKIAEGDITWRKVIDGFFSSFKQDVERAEEEMEKIEIKDEPAGEDCEVCGSPMVIKMGRYGKFMACSNFPDCRNTKAIVKSIGVKCPKCNDGDVVERKSKKNRVFYGCSKYPECDFISWDKPIGRDCPKCNQYLVENKKGKTTQVICSNCDYKEAAQK.

The 111-residue stretch at 3-113 (DNLVIVESPA…KENRVVFNEI (111 aa)) folds into the Toprim domain. Mg(2+) is bound by residues glutamate 9 and aspartate 82. The Topo IA-type catalytic domain occupies 129–557 (EMNLVDAQQA…FFSSFKQDVE (429 aa)). The segment at 163-168 (SAGRVQ) is interaction with DNA. Tyrosine 298 serves as the catalytic O-(5'-phospho-DNA)-tyrosine intermediate. The segment at 328–357 (SKRKASGKQGDQDAHEAIRPSSTMRTPDDM) is disordered. C4-type zinc fingers lie at residues 577–603 (CEVC…FPDC), 617–645 (CPKC…YPEC), and 658–681 (CPKC…CSNC).

It belongs to the type IA topoisomerase family. Monomer. The cofactor is Mg(2+).

It carries out the reaction ATP-independent breakage of single-stranded DNA, followed by passage and rejoining.. Releases the supercoiling and torsional tension of DNA, which is introduced during the DNA replication and transcription, by transiently cleaving and rejoining one strand of the DNA duplex. Introduces a single-strand break via transesterification at a target site in duplex DNA. The scissile phosphodiester is attacked by the catalytic tyrosine of the enzyme, resulting in the formation of a DNA-(5'-phosphotyrosyl)-enzyme intermediate and the expulsion of a 3'-OH DNA strand. The free DNA strand then undergoes passage around the unbroken strand, thus removing DNA supercoils. Finally, in the religation step, the DNA 3'-OH attacks the covalent intermediate to expel the active-site tyrosine and restore the DNA phosphodiester backbone. This is DNA topoisomerase 1 from Staphylococcus aureus.